Consider the following 425-residue polypeptide: tRNA(Ile)-lysidine synthase (425 aa).

Position 27 to 32 (27 to 32 (SGGLDS)) interacts with ATP.

This sequence belongs to the tRNA(Ile)-lysidine synthase family.

It is found in the cytoplasm. The catalysed reaction is cytidine(34) in tRNA(Ile2) + L-lysine + ATP = lysidine(34) in tRNA(Ile2) + AMP + diphosphate + H(+). Functionally, ligates lysine onto the cytidine present at position 34 of the AUA codon-specific tRNA(Ile) that contains the anticodon CAU, in an ATP-dependent manner. Cytidine is converted to lysidine, thus changing the amino acid specificity of the tRNA from methionine to isoleucine. The polypeptide is tRNA(Ile)-lysidine synthase (Streptococcus pneumoniae serotype 19F (strain G54)).